We begin with the raw amino-acid sequence, 206 residues long: Pyrrolidone-carboxylate peptidase 2 (206 aa).

Active-site residues include Glu-78, Cys-141, and His-165.

The protein belongs to the peptidase C15 family. As to quaternary structure, homotetramer.

Its subcellular location is the cytoplasm. The enzyme catalyses Release of an N-terminal pyroglutamyl group from a polypeptide, the second amino acid generally not being Pro.. Its function is as follows. Removes 5-oxoproline from various penultimate amino acid residues except L-proline. The chain is Pyrrolidone-carboxylate peptidase 2 from Caldanaerobacter subterraneus subsp. tengcongensis (strain DSM 15242 / JCM 11007 / NBRC 100824 / MB4) (Thermoanaerobacter tengcongensis).